A 594-amino-acid polypeptide reads, in one-letter code: UvrABC system protein C (594 aa).

The GIY-YIG domain occupies 13–99 (NSSGVYQYFD…IKQLKPKYNI (87 aa)). In terms of domain architecture, UVR spans 205 to 240 (DRLIKELELKMERLSSKLRFEEALIYRDRIAKIQKI).

Belongs to the UvrC family. Interacts with UvrB in an incision complex.

It is found in the cytoplasm. The UvrABC repair system catalyzes the recognition and processing of DNA lesions. UvrC both incises the 5' and 3' sides of the lesion. The N-terminal half is responsible for the 3' incision and the C-terminal half is responsible for the 5' incision. In Helicobacter pylori (strain P12), this protein is UvrABC system protein C.